Consider the following 396-residue polypeptide: Methionine import ATP-binding protein MetN 2 (396 aa).

The ABC transporter domain maps to 41–280 (VSFELVGKVF…PRHGATRALL (240 aa)). 77–84 (GRSGAGKS) is a binding site for ATP.

The protein belongs to the ABC transporter superfamily. Methionine importer (TC 3.A.1.24) family. In terms of assembly, the complex is composed of two ATP-binding proteins (MetN), two transmembrane proteins (MetI) and a solute-binding protein (MetQ).

It is found in the cell inner membrane. It catalyses the reaction L-methionine(out) + ATP + H2O = L-methionine(in) + ADP + phosphate + H(+). It carries out the reaction D-methionine(out) + ATP + H2O = D-methionine(in) + ADP + phosphate + H(+). In terms of biological role, part of the ABC transporter complex MetNIQ involved in methionine import. Responsible for energy coupling to the transport system. The sequence is that of Methionine import ATP-binding protein MetN 2 from Burkholderia mallei (strain ATCC 23344).